Reading from the N-terminus, the 87-residue chain is Phosphocarrier protein HPr (87 aa).

The region spanning 1–87 is the HPr domain; the sequence is MASKDFHIVA…AETMTKEGLA (87 aa). The active-site Pros-phosphohistidine intermediate is the His15. The residue at position 46 (Ser46) is a Phosphoserine; by HPrK/P.

It belongs to the HPr family.

It is found in the cytoplasm. Its activity is regulated as follows. Phosphorylation on Ser-46 inhibits the phosphoryl transfer from enzyme I to HPr. General (non sugar-specific) component of the phosphoenolpyruvate-dependent sugar phosphotransferase system (sugar PTS). This major carbohydrate active-transport system catalyzes the phosphorylation of incoming sugar substrates concomitantly with their translocation across the cell membrane. The phosphoryl group from phosphoenolpyruvate (PEP) is transferred to the phosphoryl carrier protein HPr by enzyme I. Phospho-HPr then transfers it to the PTS EIIA domain. Functionally, P-Ser-HPr interacts with the catabolite control protein A (CcpA), forming a complex that binds to DNA at the catabolite response elements cre, operator sites preceding a large number of catabolite-regulated genes. Thus, P-Ser-HPr is a corepressor in carbon catabolite repression (CCR), a mechanism that allows bacteria to coordinate and optimize the utilization of available carbon sources. P-Ser-HPr also plays a role in inducer exclusion, in which it probably interacts with several non-PTS permeases and inhibits their transport activity. In Streptococcus salivarius, this protein is Phosphocarrier protein HPr (ptsH).